The following is a 427-amino-acid chain: Glutamate-1-semialdehyde 2,1-aminomutase (427 aa).

N6-(pyridoxal phosphate)lysine is present on Lys265.

This sequence belongs to the class-III pyridoxal-phosphate-dependent aminotransferase family. HemL subfamily. Homodimer. Pyridoxal 5'-phosphate is required as a cofactor.

It localises to the cytoplasm. The enzyme catalyses (S)-4-amino-5-oxopentanoate = 5-aminolevulinate. The protein operates within porphyrin-containing compound metabolism; protoporphyrin-IX biosynthesis; 5-aminolevulinate from L-glutamyl-tRNA(Glu): step 2/2. This is Glutamate-1-semialdehyde 2,1-aminomutase from Burkholderia ambifaria (strain MC40-6).